Reading from the N-terminus, the 200-residue chain is Large ribosomal subunit protein uL4 (200 aa).

A disordered region spans residues 38 to 73 (GRQGTKGQKSRSDVSGGGKRPWRQKGTGRARAGTTR).

This sequence belongs to the universal ribosomal protein uL4 family. In terms of assembly, part of the 50S ribosomal subunit.

In terms of biological role, one of the primary rRNA binding proteins, this protein initially binds near the 5'-end of the 23S rRNA. It is important during the early stages of 50S assembly. It makes multiple contacts with different domains of the 23S rRNA in the assembled 50S subunit and ribosome. Its function is as follows. Forms part of the polypeptide exit tunnel. The sequence is that of Large ribosomal subunit protein uL4 from Ectopseudomonas mendocina (strain ymp) (Pseudomonas mendocina).